Here is a 657-residue protein sequence, read N- to C-terminus: Glycogen debranching enzyme (657 aa).

Catalysis depends on Asp-336, which acts as the Nucleophile. Glu-371 (proton donor) is an active-site residue. Positions 458-467 (NEANGEENRD) are enriched in basic and acidic residues. The interval 458-479 (NEANGEENRDGTNNNYSNNHGK) is disordered.

It belongs to the glycosyl hydrolase 13 family.

The catalysed reaction is Hydrolysis of (1-&gt;6)-alpha-D-glucosidic linkages to branches with degrees of polymerization of three or four glucose residues in limit dextrin.. It functions in the pathway glycan degradation; glycogen degradation. Functionally, removes maltotriose and maltotetraose chains that are attached by 1,6-alpha-linkage to the limit dextrin main chain, generating a debranched limit dextrin. The chain is Glycogen debranching enzyme from Escherichia coli (strain K12 / DH10B).